A 351-amino-acid chain; its full sequence is DNA polymerase IV (351 aa).

The UmuC domain occupies 4 to 184 (FIHIDMDCFY…LPLGKIPGVG (181 aa)). 2 residues coordinate Mg(2+): D8 and D102. The active site involves E103.

Belongs to the DNA polymerase type-Y family. As to quaternary structure, monomer. Requires Mg(2+) as cofactor.

The protein localises to the cytoplasm. It catalyses the reaction DNA(n) + a 2'-deoxyribonucleoside 5'-triphosphate = DNA(n+1) + diphosphate. Poorly processive, error-prone DNA polymerase involved in untargeted mutagenesis. Copies undamaged DNA at stalled replication forks, which arise in vivo from mismatched or misaligned primer ends. These misaligned primers can be extended by PolIV. Exhibits no 3'-5' exonuclease (proofreading) activity. May be involved in translesional synthesis, in conjunction with the beta clamp from PolIII. The protein is DNA polymerase IV of Pseudoalteromonas translucida (strain TAC 125).